The chain runs to 947 residues: Protein RRC1-like (947 aa).

The segment covering 1–11 has biased composition (basic and acidic residues); sequence MVKDEFFLDHP. Disordered regions lie at residues 1–35 and 63–167; these read MVKD…RMKQ and PNDN…DELP. Over residues 12 to 34 the composition is skewed to basic residues; the sequence is GRKHRSRNTEKKKKPRRRERRMK. Composition is skewed to basic and acidic residues over residues 66 to 84 and 104 to 155; these read NKLK…DSIS and KGPE…DHNS. In terms of domain architecture, RRM spans 187 to 268; it reads TNLYVVNLSS…YELKIGWGKV (82 aa). The SURP motif repeat unit spans residues 336–379; sequence IIDTMALNVLDGGCAFEQAIMERGRGNPLFNFLFELGSKEHTYY. The disordered stretch occupies residues 412–434; it reads PPLPATRSPEHGKESRGTYAAGK. Residues 444 to 589 enclose the CID domain; that stretch reads LTDSQRDEFE…GLRATFLRSR (146 aa). Positions 638-672 constitute an SAP domain; sequence LMNRPISELERRCRHNGLSLLGGREMMVARLVCLK. Disordered stretches follow at residues 752–797 and 846–947; these read REDD…PENE and GLSG…RGMR. 3 stretches are compositionally biased toward basic and acidic residues: residues 854-876, 888-916, and 924-947; these read LPEK…RSES, LTRE…LDKD, and SSRE…RGMR.

Expressed in leaves, inflorescence stems, roots, flower buds, open flowers and siliques.

Its function is as follows. Probable SR-like splicing factor. The protein is Protein RRC1-like of Arabidopsis thaliana (Mouse-ear cress).